Consider the following 271-residue polypeptide: Putative pyruvate, phosphate dikinase regulatory protein (271 aa).

151–158 (GISRTSKT) serves as a coordination point for ADP.

It belongs to the pyruvate, phosphate/water dikinase regulatory protein family. PDRP subfamily.

It carries out the reaction N(tele)-phospho-L-histidyl/L-threonyl-[pyruvate, phosphate dikinase] + ADP = N(tele)-phospho-L-histidyl/O-phospho-L-threonyl-[pyruvate, phosphate dikinase] + AMP + H(+). The enzyme catalyses N(tele)-phospho-L-histidyl/O-phospho-L-threonyl-[pyruvate, phosphate dikinase] + phosphate + H(+) = N(tele)-phospho-L-histidyl/L-threonyl-[pyruvate, phosphate dikinase] + diphosphate. Bifunctional serine/threonine kinase and phosphorylase involved in the regulation of the pyruvate, phosphate dikinase (PPDK) by catalyzing its phosphorylation/dephosphorylation. The chain is Putative pyruvate, phosphate dikinase regulatory protein from Streptococcus uberis (strain ATCC BAA-854 / 0140J).